The primary structure comprises 199 residues: Thymidine kinase (199 aa).

ATP contacts are provided by residues 15 to 22 (GSMFSGKS) and 88 to 91 (DEVQ). Residue E89 is the Proton acceptor of the active site. Zn(2+) contacts are provided by C145, C148, C183, and H186.

Belongs to the thymidine kinase family. As to quaternary structure, homotetramer.

The protein localises to the cytoplasm. It catalyses the reaction thymidine + ATP = dTMP + ADP + H(+). This is Thymidine kinase from Staphylococcus saprophyticus subsp. saprophyticus (strain ATCC 15305 / DSM 20229 / NCIMB 8711 / NCTC 7292 / S-41).